Reading from the N-terminus, the 310-residue chain is Membrane protein insertase YidC 2 (310 aa).

Positions 1–23 are cleaved as a signal peptide; sequence MKKTLKRILFSSLSLSILLLLTG. C24 is lipidated: N-palmitoyl cysteine. C24 is lipidated: S-diacylglycerol cysteine. A run of 5 helical transmembrane segments spans residues 33 to 53, 58 to 78, 135 to 155, 180 to 200, and 219 to 239; these read PYGVIWNTLGVPMANLITYFA, LGFGVAIIIVTIIVRVIILPL, FGGIGCLPLLIQMPFFSAIFF, LTVIIAILYFVQSWLSMQGVP, and VFMSISLPASVALYWFIGGIF. Residues 262-310 form a disordered region; sequence EYTKNPPKAYKSNNARKDVTSSTKTTESNQAIITSKKTNRNAGKQKRRG. The segment covering 281–297 has biased composition (polar residues); sequence TSSTKTTESNQAIITSK. Residues 298-310 show a composition bias toward basic residues; it reads KTNRNAGKQKRRG.

Belongs to the OXA1/ALB3/YidC family. Type 2 subfamily.

The protein resides in the cell membrane. In terms of biological role, required for the insertion and/or proper folding and/or complex formation of integral membrane proteins into the membrane. Involved in integration of membrane proteins that insert both dependently and independently of the Sec translocase complex, as well as at least some lipoproteins. In Streptococcus agalactiae serotype III (strain NEM316), this protein is Membrane protein insertase YidC 2.